The chain runs to 368 residues: High affinity transport system protein p37 (368 aa).

The first 25 residues, M1–S25, serve as a signal peptide directing secretion. C26 carries the N-palmitoyl cysteine lipid modification. C26 carries the S-diacylglycerol cysteine lipid modification.

The protein resides in the cell membrane. In terms of biological role, P37 is part of a high-affinity transport system. This is High affinity transport system protein p37 (p37) from Mycoplasma genitalium (strain ATCC 33530 / DSM 19775 / NCTC 10195 / G37) (Mycoplasmoides genitalium).